Consider the following 166-residue polypeptide: NAD(P)H-quinone oxidoreductase subunit I, chloroplastic (166 aa).

4Fe-4S ferredoxin-type domains follow at residues 55–84 and 95–124; these read GRIH…VDWK and LNYS…MTEE. The [4Fe-4S] cluster site is built by cysteine 64, cysteine 67, cysteine 70, cysteine 74, cysteine 104, cysteine 107, cysteine 110, and cysteine 114.

This sequence belongs to the complex I 23 kDa subunit family. In terms of assembly, NDH is composed of at least 16 different subunits, 5 of which are encoded in the nucleus. The cofactor is [4Fe-4S] cluster.

It is found in the plastid. Its subcellular location is the chloroplast thylakoid membrane. It catalyses the reaction a plastoquinone + NADH + (n+1) H(+)(in) = a plastoquinol + NAD(+) + n H(+)(out). The enzyme catalyses a plastoquinone + NADPH + (n+1) H(+)(in) = a plastoquinol + NADP(+) + n H(+)(out). Functionally, NDH shuttles electrons from NAD(P)H:plastoquinone, via FMN and iron-sulfur (Fe-S) centers, to quinones in the photosynthetic chain and possibly in a chloroplast respiratory chain. The immediate electron acceptor for the enzyme in this species is believed to be plastoquinone. Couples the redox reaction to proton translocation, and thus conserves the redox energy in a proton gradient. The protein is NAD(P)H-quinone oxidoreductase subunit I, chloroplastic of Parthenium hysterophorus (Santa Maria feverfew).